A 256-amino-acid chain; its full sequence is Thiazole synthase (256 aa).

Lysine 95 functions as the Schiff-base intermediate with DXP in the catalytic mechanism. 1-deoxy-D-xylulose 5-phosphate is bound by residues glycine 156, 182 to 183 (AG), and 204 to 205 (NT).

This sequence belongs to the ThiG family. In terms of assembly, homotetramer. Forms heterodimers with either ThiH or ThiS.

It localises to the cytoplasm. It catalyses the reaction [ThiS sulfur-carrier protein]-C-terminal-Gly-aminoethanethioate + 2-iminoacetate + 1-deoxy-D-xylulose 5-phosphate = [ThiS sulfur-carrier protein]-C-terminal Gly-Gly + 2-[(2R,5Z)-2-carboxy-4-methylthiazol-5(2H)-ylidene]ethyl phosphate + 2 H2O + H(+). Its pathway is cofactor biosynthesis; thiamine diphosphate biosynthesis. In terms of biological role, catalyzes the rearrangement of 1-deoxy-D-xylulose 5-phosphate (DXP) to produce the thiazole phosphate moiety of thiamine. Sulfur is provided by the thiocarboxylate moiety of the carrier protein ThiS. In vitro, sulfur can be provided by H(2)S. This Cronobacter sakazakii (strain ATCC BAA-894) (Enterobacter sakazakii) protein is Thiazole synthase.